The chain runs to 635 residues: Surface protein F (635 aa).

The signal sequence occupies residues 1 to 37 (MAKYRGKPFQLYVKLSCSTMMATSIILTNILPYDAQA). 2 stretches are compositionally biased toward basic and acidic residues: residues 101 to 112 (NELDSKDNKSSH) and 193 to 202 (KSKDASKDTS). Disordered stretches follow at residues 101–122 (NELD…SDID) and 192–228 (HKSK…SGHV). Positions 597–601 (LPKAG) match the LPXTG sorting signal motif. The residue at position 600 (Ala-600) is a Pentaglycyl murein peptidoglycan amidated alanine. Positions 601–635 (GETIKEHWLPISVIVGAMGVLMIWLSRRNKLKNKA) are cleaved as a propeptide — removed by sortase.

Its subcellular location is the secreted. It localises to the cell wall. This chain is Surface protein F, found in Staphylococcus aureus (strain NCTC 8325 / PS 47).